Here is an 891-residue protein sequence, read N- to C-terminus: Alanine--tRNA ligase (891 aa).

Zn(2+) is bound by residues His564, His568, Cys681, and His685.

This sequence belongs to the class-II aminoacyl-tRNA synthetase family. Zn(2+) serves as cofactor.

It localises to the cytoplasm. It catalyses the reaction tRNA(Ala) + L-alanine + ATP = L-alanyl-tRNA(Ala) + AMP + diphosphate. Its function is as follows. Catalyzes the attachment of alanine to tRNA(Ala) in a two-step reaction: alanine is first activated by ATP to form Ala-AMP and then transferred to the acceptor end of tRNA(Ala). Also edits incorrectly charged Ser-tRNA(Ala) and Gly-tRNA(Ala) via its editing domain. The chain is Alanine--tRNA ligase from Methylorubrum extorquens (strain PA1) (Methylobacterium extorquens).